A 514-amino-acid chain; its full sequence is Sugar transport protein 3 (514 aa).

Residues Met-1–Lys-19 are Cytoplasmic-facing. Helical transmembrane passes span Ile-20–Tyr-40, Leu-87–Ser-107, Val-124–Ile-144, Leu-147–Met-167, Gly-174–Ile-194, Ile-207–Pro-227, Leu-289–Phe-309, Met-327–Val-347, Phe-356–Val-376, Val-392–Trp-412, Val-430–Leu-450, and Gly-456–Leu-476. Over Pro-477–His-514 the chain is Cytoplasmic.

The protein belongs to the major facilitator superfamily. Sugar transporter (TC 2.A.1.1) family.

It is found in the membrane. Functionally, mediates an active uptake of hexoses, probably by sugar/hydrogen symport. In Arabidopsis thaliana (Mouse-ear cress), this protein is Sugar transport protein 3 (STP3).